The following is a 177-amino-acid chain: O-acetyl-ADP-ribose deacetylase (177 aa).

In terms of domain architecture, Macro spans 1 to 175 (MKSRIHVLQG…LYNRLLTQQG (175 aa)). Residues 11–12 (DI), N25, 33–35 (GVD), and 122–126 (STGVY) each bind substrate. Residue D35 is the Proton acceptor of the active site.

It belongs to the MacroD-type family. YmdB subfamily. In terms of assembly, homodimer. Interacts with RNase III.

It carries out the reaction 3''-O-acetyl-ADP-D-ribose + H2O = ADP-D-ribose + acetate + H(+). The catalysed reaction is 2''-O-acetyl-ADP-D-ribose + H2O = ADP-D-ribose + acetate + H(+). Functionally, deacetylates O-acetyl-ADP ribose to yield ADP-ribose and free acetate. Down-regulates ribonuclease 3 (RNase III) activity. Acts by interacting directly with the region of the ribonuclease that is required for dimerization/activation. This Escherichia fergusonii (strain ATCC 35469 / DSM 13698 / CCUG 18766 / IAM 14443 / JCM 21226 / LMG 7866 / NBRC 102419 / NCTC 12128 / CDC 0568-73) protein is O-acetyl-ADP-ribose deacetylase.